We begin with the raw amino-acid sequence, 439 residues long: Histidine--tRNA ligase (439 aa).

Belongs to the class-II aminoacyl-tRNA synthetase family. Homodimer.

It is found in the cytoplasm. It catalyses the reaction tRNA(His) + L-histidine + ATP = L-histidyl-tRNA(His) + AMP + diphosphate + H(+). This chain is Histidine--tRNA ligase, found in Leptospira borgpetersenii serovar Hardjo-bovis (strain L550).